The primary structure comprises 201 residues: Potassium-transporting ATPase KdpC subunit (201 aa).

A helical transmembrane segment spans residues 12–34 (LLALTMITGLAYPLAVTGLATVL). A disordered region spans residues 69-102 (RPSATVAPDPADSSKTVSAPYNAANSGGSNLGPT). Residues 81-101 (SSKTVSAPYNAANSGGSNLGP) show a composition bias toward polar residues.

It belongs to the KdpC family. As to quaternary structure, the system is composed of three essential subunits: KdpA, KdpB and KdpC.

The protein localises to the cell inner membrane. In terms of biological role, part of the high-affinity ATP-driven potassium transport (or Kdp) system, which catalyzes the hydrolysis of ATP coupled with the electrogenic transport of potassium into the cytoplasm. This subunit acts as a catalytic chaperone that increases the ATP-binding affinity of the ATP-hydrolyzing subunit KdpB by the formation of a transient KdpB/KdpC/ATP ternary complex. The sequence is that of Potassium-transporting ATPase KdpC subunit from Rhodopseudomonas palustris (strain TIE-1).